We begin with the raw amino-acid sequence, 338 residues long: L-serine dehydratase (338 aa).

An N6-(pyridoxal phosphate)lysine modification is found at lysine 39.

Belongs to the serine/threonine dehydratase family. Pyridoxal 5'-phosphate is required as a cofactor.

It is found in the cytoplasm. The catalysed reaction is L-serine = pyruvate + NH4(+). It functions in the pathway carbohydrate biosynthesis; gluconeogenesis. This is L-serine dehydratase (SDL1) from Saccharomyces cerevisiae (strain RM11-1a) (Baker's yeast).